A 105-amino-acid polypeptide reads, in one-letter code: MADWNGEYISPYAEHGKKSEQVKKITVSIPLKVLKVLTDERTRRQINNLRHATNSELLCEAFLHAYTGQPLPTDEDLRKDRPDDIPTEAKELMTAMGIEFEAYDD.

This sequence belongs to the MetJ family. In terms of assembly, homodimer.

It localises to the cytoplasm. Its function is as follows. This regulatory protein, when combined with SAM (S-adenosylmethionine) represses the expression of the methionine regulon and of enzymes involved in SAM synthesis. This Vibrio vulnificus (strain CMCP6) protein is Met repressor.